A 398-amino-acid chain; its full sequence is MNSLDFDRKPEDTRVVVAMSGGVDSSVVAGLLKREGYDVLGITLQLYDHGAAVHRAGSCCAGQDIDDARRVCETLGIPHYVLDYEARFRETVINPFAESYIAGETPIPCVACNQTVKFADLLATAKELGADALATGHYIRSRPSPKPRYQGQRALYRPTDAERDQSYFLFATTQEQIDYLRFPLGNLSKPETRALAEEMGLVVAKKADSQDICFVPQGKYSDIVSKLKPNAALGGEIVHLDGRVLGTHEGILHYTIGQRRGIGVATGEPLYVVYLDARSRRVIVGPKEALETRRVYLRDVNWLGDEEIDAAASRGFACFAKVRSTRQPAPAEMKCDADGIYVELVDGEAGVAPGQACALYSGTGEDARVYGGGFIRKSEREPAAEAALQALLQAPAAA.

ATP-binding positions include A18–S25 and L44. C112 (nucleophile) is an active-site residue. C112 and C213 form a disulfide bridge. G136 serves as a coordination point for ATP. The interval R163–Q165 is interaction with tRNA. C213 acts as the Cysteine persulfide intermediate in catalysis.

Belongs to the MnmA/TRMU family.

It localises to the cytoplasm. It catalyses the reaction S-sulfanyl-L-cysteinyl-[protein] + uridine(34) in tRNA + AH2 + ATP = 2-thiouridine(34) in tRNA + L-cysteinyl-[protein] + A + AMP + diphosphate + H(+). Its function is as follows. Catalyzes the 2-thiolation of uridine at the wobble position (U34) of tRNA, leading to the formation of s(2)U34. In Sinorhizobium fredii (strain NBRC 101917 / NGR234), this protein is tRNA-specific 2-thiouridylase MnmA.